The sequence spans 192 residues: Chromophore lyase CpcS/CpeS 2 (192 aa).

It belongs to the CpcS/CpeS biliprotein lyase family.

Functionally, covalently attaches a chromophore to Cys residue(s) of phycobiliproteins. This chain is Chromophore lyase CpcS/CpeS 2, found in Synechocystis sp. (strain ATCC 27184 / PCC 6803 / Kazusa).